A 101-amino-acid polypeptide reads, in one-letter code: Small ribosomal subunit protein uS14 (101 aa).

Belongs to the universal ribosomal protein uS14 family. Part of the 30S ribosomal subunit. Contacts proteins S3 and S10.

Binds 16S rRNA, required for the assembly of 30S particles and may also be responsible for determining the conformation of the 16S rRNA at the A site. This chain is Small ribosomal subunit protein uS14, found in Xylella fastidiosa (strain 9a5c).